The chain runs to 155 residues: MGEMGKAIGLLISGTLVYHHCANRNATLLSLISDVLIVLLSSLAILGLLFRHLNVSVPVDPLEWQISQDTACNIVARLANTVGAAESVLRVAATGHDKRLFVKVVICLYFLAALGRIISGVTIAYAGLCLFCLSMLFRSSIRNSVLNRRNGEILD.

In terms of domain architecture, Reticulon spans 1-155; the sequence is MGEMGKAIGL…LNRRNGEILD (155 aa). 2 helical membrane passes run 30 to 50 and 117 to 137; these read SLIS…GLLF and IISG…SMLF.

It is found in the endoplasmic reticulum membrane. In Arabidopsis thaliana (Mouse-ear cress), this protein is Reticulon-like protein B23 (RTNLB23).